A 186-amino-acid polypeptide reads, in one-letter code: Methylamine dehydrogenase light chain (186 aa).

The tat-type signal signal peptide spans Met1 to Ala57. 6 disulfide bridges follow: Cys78–Cys143, Cys84–Cys116, Cys91–Cys176, Cys93–Cys141, Cys101–Cys132, and Cys133–Cys164. The residue at position 112 (Trp112) is a Tryptophylquinone. Positions Trp112–Trp163 form a cross-link, tryptophan tryptophylquinone (Trp-Trp).

Belongs to the aromatic amine dehydrogenase light chain family. In terms of assembly, heterotetramer of two light and two heavy chains. Tryptophan tryptophylquinone residue is required as a cofactor. Predicted to be exported by the Tat system. The position of the signal peptide cleavage has been experimentally proven. In terms of processing, tryptophan tryptophylquinone (TTQ) is formed by oxidation of the indole ring of a tryptophan to form tryptophylquinone followed by covalent cross-linking with another tryptophan residue.

The protein localises to the periplasm. The enzyme catalyses 2 oxidized [amicyanin] + methylamine + H2O = 2 reduced [amicyanin] + formaldehyde + NH4(+) + 2 H(+). The protein operates within one-carbon metabolism; methylamine degradation; formaldehyde from methylamine: step 1/1. Its function is as follows. Methylamine dehydrogenase carries out the oxidation of methylamine. Electrons are passed from methylamine dehydrogenase to amicyanin. The protein is Methylamine dehydrogenase light chain (mauA) of Methylorubrum extorquens (strain ATCC 14718 / DSM 1338 / JCM 2805 / NCIMB 9133 / AM1) (Methylobacterium extorquens).